We begin with the raw amino-acid sequence, 266 residues long: Putative carbamate hydrolase RutD (266 aa).

It belongs to the AB hydrolase superfamily. Hydrolase RutD family.

The enzyme catalyses carbamate + 2 H(+) = NH4(+) + CO2. In terms of biological role, involved in pyrimidine catabolism. May facilitate the hydrolysis of carbamate, a reaction that can also occur spontaneously. This is Putative carbamate hydrolase RutD from Acinetobacter baylyi (strain ATCC 33305 / BD413 / ADP1).